The primary structure comprises 884 residues: DNA mismatch repair protein MutS (884 aa).

Gly-643–Ser-650 lines the ATP pocket.

It belongs to the DNA mismatch repair MutS family.

In terms of biological role, this protein is involved in the repair of mismatches in DNA. It is possible that it carries out the mismatch recognition step. This protein has a weak ATPase activity. The protein is DNA mismatch repair protein MutS of Methylobacillus flagellatus (strain ATCC 51484 / DSM 6875 / VKM B-1610 / KT).